The primary structure comprises 129 residues: Gas vesicle protein C (129 aa).

Repeats lie at residues 19–51 (VTQL…LHQF), 52–84 (HQNL…LHKF), and 85–117 (HQNL…LQQF). The interval 19-117 (VTQLFRETHE…KAQSQYLQQF (99 aa)) is 3 X 33 AA tandem repeats.

The protein belongs to the gas vesicle GvpC family.

Its subcellular location is the gas vesicle. In terms of biological role, confers stability, involved in shaping gas vesicles, hollow, gas filled proteinaceous nanostructures. During planktonic growth they allow positioning of the organism at a favorable depth for light or nutrient acquisition. Functionally, cluster expression in E.coli (gvpA1-gvpA2-gvpC-gvpN-gvpJ-gvpK-gvpF-gvpG-gvpV-gvpW) allows cells to float and produces irregularly shaped gas vesicles. This Nostoc sp. (strain PCC 7120 / SAG 25.82 / UTEX 2576) protein is Gas vesicle protein C.